A 159-amino-acid chain; its full sequence is Outer envelope pore protein 16-3, chloroplastic/mitochondrial (159 aa).

Position 1 is an N-acetylmethionine (Met-1). The contains beta strands stretch occupies residues 1–65; the sequence is MDPAEMRYLE…IRTLKMMGTH (65 aa). 3 helical membrane-spanning segments follow: residues 24–40, 62–79, and 92–109; these read ITGF…LATW, MGTH…YIGV, and FYNG…VLGY.

The protein belongs to the Tim17/Tim22/Tim23 family. Plastid outer envelope porin OEP16 (TC 1.B.30) subfamily. In terms of assembly, homodimer and oligomers in membrane. Part of both the NADH-ubiquinone oxidoreductase complex I and of the TIM17:23 complex. Interacts with TIM23-2.

It localises to the plastid. The protein resides in the chloroplast outer membrane. It is found in the mitochondrion outer membrane. Its subcellular location is the mitochondrion inner membrane. Voltage-dependent high-conductance channel with a slight cation-selectivity; selective for amino acids but excludes triosephosphates or uncharged sugars. Non-essential amino acid-selective channel protein and translocation pore for NADPH:protochlorophyllide oxidoreductase A (PORA) and possibly PORB. This is Outer envelope pore protein 16-3, chloroplastic/mitochondrial (OEP163) from Arabidopsis thaliana (Mouse-ear cress).